The primary structure comprises 118 residues: ATP synthase subunit g, mitochondrial (118 aa).

As to quaternary structure, F-type ATP synthases have 2 components, the catalytic core F(1) and the membrane-embedded component F(0), linked together by a central stalk and a peripheral stalk. The central stalk, also called rotor shaft, is often seen as part of F(1). The peripheral stalk is seen as part of F(0). F(0) contains the membrane channel next to the rotor. F-type ATP synthases form dimers but each monomer functions independently in ATP generation. The dimer consists of 18 different polypeptides: ATP1 (subunit alpha, part of F(1), 3 molecules per monomer), ATP2 (subunit beta, part of F(1), 3 molecules per monomer), ATP3 (subunit gamma, part of the central stalk), ATP4 (subunit b, part of the peripheral stalk), ATP5/OSCP (subunit 5/OSCP, part of the peripheral stalk), ATP6 (subunit a, part of the peripheral stalk), ATP7 (subunit d, part of the peripheral stalk), ATP8 (subunit 8, part of the peripheral stalk), OLI1 (subunit c, part of the rotor, 10 molecules per monomer), ATP14 (subunit h, part of the peripheral stalk), ATP15 (subunit epsilon, part of the central stalk), ATP16 (subunit delta, part of the central stalk), ATP17 (subunit f, part of the peripheral stalk), ATP18 (subunit i/j, part of the peripheral stalk). Dimer-specific subunits are ATP19 (subunit k, at interface between monomers), ATP20 (subunit g, at interface between monomers), TIM11 (subunit e, at interface between monomers). Also contains subunit L.

The protein localises to the mitochondrion inner membrane. Its function is as follows. Mitochondrial membrane ATP synthase (F(1)F(0) ATP synthase or Complex V) produces ATP from ADP in the presence of a proton gradient across the membrane which is generated by electron transport complexes of the respiratory chain. F-type ATP synthases consist of two structural domains, F(1) - containing the extramembraneous catalytic core, and F(0) - containing the membrane proton channel, linked together by a central stalk and a peripheral stalk. During catalysis, ATP synthesis in the catalytic domain of F(1) is coupled via a rotary mechanism of the central stalk subunits to proton translocation. Part of the complex F(0) domain Minor subunit located with subunit a/ATP6 in the membrane. Together with subunit e/TIM11, probably contributes to membrane curvature at the site of the ATP synthase dimer, ultimately contributing to formation of cristae. This chain is ATP synthase subunit g, mitochondrial, found in Pichia angusta (Yeast).